Consider the following 402-residue polypeptide: D-galactonate dehydratase family member EGBG_02030 (402 aa).

Asp207 is a binding site for Mg(2+). Residue His209 coordinates D-arabinonate. Glu233 and Glu259 together coordinate Mg(2+). Residues Glu259, Arg280, His309, and Glu336 each contribute to the D-arabinonate site.

The protein belongs to the mandelate racemase/muconate lactonizing enzyme family. GalD subfamily.

Its function is as follows. Has no detectable activity with D-mannonate and with a panel of 70 other acid sugars (in vitro), in spite of the conservation of the residues that are expected to be important for catalytic activity and cofactor binding. May have evolved a divergent function. This is D-galactonate dehydratase family member EGBG_02030 from Enterococcus gallinarum (strain EG2).